The chain runs to 199 residues: Prolactin-1 (199 aa).

Cystine bridges form between C4–C11, C58–C174, and C191–C199. A glycan (N-linked (GlcNAc...) asparagine) is linked at N60.

Belongs to the somatotropin/prolactin family. Glycosylated.

Its subcellular location is the secreted. The polypeptide is Prolactin-1 (Crocodylus novaeguineae (Crocodile)).